The chain runs to 407 residues: 5-aminolevulinate synthase 1 (407 aa).

Substrate is bound by residues Arg-21, Ser-137, and Lys-156. Pyridoxal 5'-phosphate is bound by residues Ser-189, His-217, and Thr-245. Residue Lys-248 is part of the active site. Lys-248 is subject to N6-(pyridoxal phosphate)lysine. Residues Ser-277 and Thr-278 each coordinate pyridoxal 5'-phosphate. Thr-363 is a binding site for substrate.

The protein belongs to the class-II pyridoxal-phosphate-dependent aminotransferase family. Homodimer. Pyridoxal 5'-phosphate serves as cofactor.

The catalysed reaction is succinyl-CoA + glycine + H(+) = 5-aminolevulinate + CO2 + CoA. Its pathway is porphyrin-containing compound metabolism; protoporphyrin-IX biosynthesis; 5-aminolevulinate from glycine: step 1/1. The chain is 5-aminolevulinate synthase 1 (hemA) from Cereibacter sphaeroides (strain ATCC 17023 / DSM 158 / JCM 6121 / CCUG 31486 / LMG 2827 / NBRC 12203 / NCIMB 8253 / ATH 2.4.1.) (Rhodobacter sphaeroides).